We begin with the raw amino-acid sequence, 92 residues long: Transcription factor PRE4 (92 aa).

Residues 5–60 form the bHLH domain; that stretch reads KSRSRQTGASMITDEQINDLVLQLHRLLPELANNRRSGKVSASRVLQETCSYIRNL.

Belongs to the bHLH protein family. As to quaternary structure, interacts with HFR1 and IBH1. Expressed in roots, leaves, stems and flowers.

The protein localises to the nucleus. In terms of biological role, atypical and probable non DNA-binding bHLH transcription factor that integrates multiple signaling pathways to regulate cell elongation and plant development. Regulates light responses by binding and inhibiting the activity of the bHLH transcription factor HFR1, a critical regulator of light signaling and shade avoidance. May have a regulatory role in various aspects of gibberellin-dependent growth and development. This chain is Transcription factor PRE4 (PRE4), found in Arabidopsis thaliana (Mouse-ear cress).